Consider the following 68-residue polypeptide: Large ribosomal subunit protein bL33c (68 aa).

The protein belongs to the bacterial ribosomal protein bL33 family.

The protein localises to the plastid. The protein is Large ribosomal subunit protein bL33c of Cuscuta exaltata (Tall dodder).